We begin with the raw amino-acid sequence, 149 residues long: Calmodulin (149 aa).

Position 2 is an N-acetylalanine (A2). EF-hand domains are found at residues 8 to 43 (EQIA…LGQN), 44 to 79 (PTEA…KMKD), 81 to 116 (DSEE…LGEK), and 117 to 149 (LTDE…MTAK). Ca(2+) contacts are provided by D21, D23, D25, T27, E32, D59, N61, T63, E68, D94, D96, N98, Y100, and E105. An N6,N6,N6-trimethyllysine modification is found at K116. Ca(2+) is bound by residues D130, D132, D134, Q136, and E141.

This sequence belongs to the calmodulin family.

Functionally, calmodulin acts as part of a calcium signal transduction pathway by mediating the control of a large number of enzymes, ion channels, aquaporins and other proteins through calcium-binding. Calcium-binding is required for the activation of calmodulin. Among the enzymes to be stimulated by the calmodulin-calcium complex are a number of protein kinases, such as myosin light-chain kinases and calmodulin-dependent protein kinase type II (CaMK2), and phosphatases. In Myxine glutinosa (Atlantic hagfish), this protein is Calmodulin.